Here is a 537-residue protein sequence, read N- to C-terminus: Beta-1-syntrophin (537 aa).

Ala-2 carries the post-translational modification N-acetylalanine. PH domains are found at residues 18–297 (RAQR…SNAG) and 321–432 (EIRH…QGCH). Phosphoserine occurs at positions 86, 125, and 204. Residues 111 to 194 (GVKVLKQELG…EVLLEVKYMR (84 aa)) enclose the PDZ domain. Residues 204 to 233 (SPVSEIGWETPPPESPRLGGGSAEPLSSQS) are disordered. Thr-213 carries the post-translational modification Phosphothreonine. 5 positions are modified to phosphoserine: Ser-218, Ser-225, Ser-231, Ser-235, and Ser-388. Residues 481–537 (PYEKLKMSSDDGIRMLYLDFGGKEGEIQLDLHSCPKPIVFIIHSFLSAKITRLGLVA) form the SU domain. The segment at 517-537 (PIVFIIHSFLSAKITRLGLVA) is calmodulin-binding.

Belongs to the syntrophin family. As to quaternary structure, monomer and homodimer. Interacts with the viral HTLV-1 TAX protein and other members of the syntrophin family: SNTA1 and SNTB2. Interacts with the dystrophin protein DMD and related proteins DTNA and UTRN and with the sodium channel proteins SCN4A and SCN5A. Interacts with DTNB. In terms of processing, phosphorylated by CaM-kinase II. As to expression, ubiquitous. Expressed at high levels in the liver.

It localises to the cell membrane. It is found in the sarcolemma. The protein localises to the cell junction. The protein resides in the cytoplasm. Its subcellular location is the cytoskeleton. Its function is as follows. Adapter protein that binds to and probably organizes the subcellular localization of a variety of membrane proteins. May link various receptors to the actin cytoskeleton and the dystrophin glycoprotein complex. This Mus musculus (Mouse) protein is Beta-1-syntrophin (Sntb1).